The chain runs to 159 residues: Transcriptional repressor NrdR (159 aa).

A compositionally biased stretch (polar residues) spans 1–11 (MQCPSCQNTDS). The segment at 1-20 (MQCPSCQNTDSRVLESRSAD) is disordered. A zinc finger lies at 3–34 (CPSCQNTDSRVLESRSADSGRSVRRRRECLNC). One can recognise an ATP-cone domain in the interval 49–139 (INVLKRSGAK…VYRQFNGIND (91 aa)).

The protein belongs to the NrdR family. Zn(2+) serves as cofactor.

Functionally, negatively regulates transcription of bacterial ribonucleotide reductase nrd genes and operons by binding to NrdR-boxes. The chain is Transcriptional repressor NrdR from Prochlorococcus marinus (strain NATL1A).